Reading from the N-terminus, the 931-residue chain is Neuropilin-2 (931 aa).

Positions 1–20 (MDMFPLTWVFLALYFSRHQV) form a signal peptide, or 22. The Extracellular segment spans residues 21-864 (RGQPDPPCGG…EKSWLYTLDP (844 aa)). Disulfide bonds link C28-C55, C83-C105, and C149-C175. 2 CUB domains span residues 28-142 (CGGR…YEIF) and 149-267 (CSKN…YYLV). N-linked (GlcNAc...) asparagine glycans are attached at residues N152 and N157. Ca(2+) contacts are provided by E197, D211, and D252. A disulfide bond links C208 and C230. Disulfide bonds link C277/C427 and C434/C592. 2 F5/8 type C domains span residues 277–427 (CNVP…LFGC) and 434–592 (CSNM…VLGC). Positions 298–310 (TYSDGRWTPQQSR) are enriched in polar residues. Residues 298 to 317 (TYSDGRWTPQQSRLHGDDNG) are disordered. The disordered stretch occupies residues 601–622 (VETLGPTVKSEETTTPYPTEEE). N629 carries N-linked (GlcNAc...) asparagine glycosylation. One can recognise an MAM domain in the interval 642-802 (SGFNCNFDFL…TDVPLENCME (161 aa)). N-linked (GlcNAc...) asparagine glycosylation occurs at N839. Residues 865–889 (ILITIIAMSSLGVLLGATCAGLLLY) form a helical membrane-spanning segment. The Cytoplasmic portion of the chain corresponds to 890–931 (CTCSYSGLSSRSCTTLENYNFELYDGLKHKVKMNHQKCCSEA).

This sequence belongs to the neuropilin family. In terms of assembly, heterodimer with NRP1. Binds PLXNB1. (Microbial infection) Interacts with human cytomegalovirus proteins gL, UL128, UL130 and UL131A.

It localises to the membrane. The protein localises to the secreted. In terms of biological role, high affinity receptor for semaphorins 3C, 3F, VEGF-165 and VEGF-145 isoforms of VEGF, and the PLGF-2 isoform of PGF. (Microbial infection) Acts as a receptor for human cytomegalovirus pentamer-dependent entry in epithelial and endothelial cells. The polypeptide is Neuropilin-2 (NRP2) (Homo sapiens (Human)).